Reading from the N-terminus, the 915-residue chain is Nitrate reductase [NADH] (915 aa).

The interval methionine 1 to tryptophan 102 is disordered. Positions alanine 16–proline 26 are enriched in low complexity. Acidic residues predominate over residues alanine 57–histidine 71. A compositionally biased stretch (basic and acidic residues) spans proline 88–glycine 97. Position 189 (cysteine 189) interacts with Mo-molybdopterin. The 76-residue stretch at aspartate 538–isoleucine 613 folds into the Cytochrome b5 heme-binding domain. 2 residues coordinate heme: histidine 573 and histidine 596. Residues arginine 654–threonine 767 enclose the FAD-binding FR-type domain. FAD is bound by residues arginine 706–threonine 709, leucine 723–tyrosine 727, phenylalanine 728, phenylalanine 735, leucine 740–threonine 742, serine 791, and threonine 794.

The protein belongs to the nitrate reductase family. In terms of assembly, homodimer. It depends on FAD as a cofactor. Heme serves as cofactor. Requires Mo-molybdopterin as cofactor.

It catalyses the reaction nitrite + NAD(+) + H2O = nitrate + NADH + H(+). Nitrate reductase is a key enzyme involved in the first step of nitrate assimilation in plants, fungi and bacteria. This is Nitrate reductase [NADH] from Hordeum vulgare (Barley).